A 435-amino-acid polypeptide reads, in one-letter code: MAQTVPPCELPCKEYDVARNTGAYTSSGLATASFRTSKYLLEEWFQNCYARYHQAFADRDQSERQRHESQQLATETQALAQRTQQDSTRTVGERLQDTHSWKSELQREMEALAAETNLLLAQKQRLERALDATEVPFSITTDNLQCRERREHPNLVRDHVETELLKEAELIRNIQELLKRTIMQAVSQIRLNREHKETCEMDWSDKMEAYNIDETCGRHHSQSTEVQAHPYSTTFQESASTPETRAKFTQDNLCRAQRERLASANLRVLVDCILRDTSEDLRLQCDAVNLAFGRRCEELEDARYKLHHHLHKTLREITDQEHNVAALKQAIKDKEAPLHVAQTRLYLRSHRPNMELCRDAAQFRLLSEVEELNMSLTALREKLLEAEQSLRNLEDIHMSLEKDIAAMTNSLFIDRQKCMAHRTRYPTILQLAGYQ.

The span at D60–S69 shows a compositional bias: basic and acidic residues. Residues D60–Q96 form a disordered region. The segment covering Q70 to Q85 has biased composition (low complexity). Coiled-coil stretches lie at residues K102–R180, L310–A336, and F363–L411.

It belongs to the tektin family. In terms of assembly, microtubule inner protein component of sperm flagellar doublet microtubules. Ubiquitinated, leading to its degradation. Deubiquitinated by USP16, promoting its stability. Strongly expressed in spermatozoa. Also detected at low levels in pancreas. Expressed in airway epithelial cells.

It is found in the cytoplasm. The protein localises to the cytoskeleton. Its subcellular location is the cilium axoneme. It localises to the flagellum axoneme. Its function is as follows. Microtubule inner protein (MIP) part of the dynein-decorated doublet microtubules (DMTs) in cilia and flagellar axoneme. Forms filamentous polymers in the walls of ciliary and flagellar microtubules. Contributes to normal sperm motility. The chain is Tektin-4 from Homo sapiens (Human).